A 315-amino-acid polypeptide reads, in one-letter code: Calcium homeostasis modulator protein 6 (315 aa).

Residues 1–21 (MEKFKAVLDLQIKHRSALGYG) are Cytoplasmic-facing. A helical transmembrane segment spans residues 22-37 (LVTLLTAGGEKIFSTV). At 38 to 46 (VFQCPCTAT) the chain is on the extracellular side. Cystine bridges form between Cys-41–Cys-127, Cys-43–Cys-156, and Cys-140–Cys-147. The chain crosses the membrane as a helical span at residues 47–68 (LNLTYGLVFLLVPALALFLLGY). Over 69-103 (ALSARTWRLLTGCCSRSASTRSSSGLRSTLVCAQV) the chain is Cytoplasmic. The helical transmembrane segment at 104-128 (SAVAALAPLTWVAVALLGGSFYQCA) threads the bilayer. The Extracellular segment spans residues 129 to 169 (VSGSTRLASYLCKDRNHSCIAKLPQVPCNKQEAEMQEILSQ). A helical membrane pass occupies residues 170–192 (LKAQSQVLGWVLIAAVIFLLLVF). Residues 193–315 (KCVSRCFSPV…DAAMANTHGV (123 aa)) are Cytoplasmic-facing.

The protein belongs to the CALHM family. In terms of assembly, oligomerizes to form decameric and undecameric channels.

It localises to the cell membrane. It catalyses the reaction ATP(in) = ATP(out). Pore-forming subunit of an ATP-permeable channel. In response to pathogen-derived and proinflammatory stimuli, relocates from intracellular compartments to NK-dendritic cell and NK-macrophage immune synapses where it mediates ATP efflux and NK cell activation involved in antimicrobial and antitumor responses. May assemble to form gap junction channel-like structures with gating and ion conductance likely regulated by membrane lipids and voltage rather than by extracellular calcium levels. This is Calcium homeostasis modulator protein 6 from Rattus norvegicus (Rat).